We begin with the raw amino-acid sequence, 209 residues long: Inner membrane protein YjdF (209 aa).

The Periplasmic portion of the chain corresponds to 1–7 (MTRTLKP). The chain crosses the membrane as a helical span at residues 8-28 (LILNTSALTLTLILIYTGISA). At 29–31 (HDK) the chain is on the cytoplasmic side. Residues 32 to 52 (LTWLMEVTPVIIVVQLLLATA) traverse the membrane as a helical segment. Topologically, residues 53–55 (RRY) are periplasmic. A helical transmembrane segment spans residues 56 to 76 (PLTPLLYTLIFLHAIILMVGG). Residues 77 to 131 (QYTYAKVPVGFEVQEWLGLSRNPYDKLGHFFQGLVPALVAREILVRGMYVRGRKM) lie on the Cytoplasmic side of the membrane. A helical membrane pass occupies residues 132–152 (VAFLVCCVALAISAMYELIEW). The Periplasmic segment spans residues 153–177 (WAALAMGQGADDFLGTQGDQWDTQS). The chain crosses the membrane as a helical span at residues 178-198 (DMFCALLGALTTVIFLARFHC). The Cytoplasmic segment spans residues 199-209 (RQLRRFGLITG).

It localises to the cell inner membrane. The protein is Inner membrane protein YjdF (yjdF) of Escherichia coli (strain K12).